Reading from the N-terminus, the 128-residue chain is 3-aminoacrylate deaminase RutC (128 aa).

It belongs to the RutC family. Homotrimer.

It catalyses the reaction (Z)-3-aminoacrylate + H2O + H(+) = 3-oxopropanoate + NH4(+). In terms of biological role, involved in pyrimidine catabolism. Catalyzes the deamination of 3-aminoacrylate to malonic semialdehyde, a reaction that can also occur spontaneously. RutC may facilitate the reaction and modulate the metabolic fitness, rather than catalyzing essential functions. The protein is 3-aminoacrylate deaminase RutC of Escherichia coli O111:H- (strain 11128 / EHEC).